The chain runs to 82 residues: Small ribosomal subunit protein bS16 (82 aa).

It belongs to the bacterial ribosomal protein bS16 family.

This is Small ribosomal subunit protein bS16 from Actinobacillus succinogenes (strain ATCC 55618 / DSM 22257 / CCUG 43843 / 130Z).